Reading from the N-terminus, the 1392-residue chain is DNA-directed RNA polymerase subunit beta'' (1392 aa).

Positions 224, 295, 302, and 305 each coordinate Zn(2+).

This sequence belongs to the RNA polymerase beta' chain family. RpoC2 subfamily. In plastids the minimal PEP RNA polymerase catalytic core is composed of four subunits: alpha, beta, beta', and beta''. When a (nuclear-encoded) sigma factor is associated with the core the holoenzyme is formed, which can initiate transcription. Requires Zn(2+) as cofactor.

The protein resides in the plastid. The protein localises to the chloroplast. The enzyme catalyses RNA(n) + a ribonucleoside 5'-triphosphate = RNA(n+1) + diphosphate. DNA-dependent RNA polymerase catalyzes the transcription of DNA into RNA using the four ribonucleoside triphosphates as substrates. The protein is DNA-directed RNA polymerase subunit beta'' of Solanum tuberosum (Potato).